An 848-amino-acid polypeptide reads, in one-letter code: Neuroligin-3 (848 aa).

An N-terminal signal peptide occupies residues 1 to 37 (MWLQLGLPSLSLSPTPTVGRSLCLILWFLSLVLRAST). The Extracellular portion of the chain corresponds to 38–709 (QAPAPTVNTH…NPRDYSTELS (672 aa)). The N-linked (GlcNAc...) asparagine glycan is linked to N98. A disulfide bridge links C106 with C141. Residues 169–195 (CRKGGSGAKKQGEDLADNDGDEDEDIR) are disordered. Residues 182 to 194 (DLADNDGDEDEDI) show a composition bias toward acidic residues. 2 disulfide bridges follow: C340-C351 and C510-C544. The N-linked (GlcNAc...) asparagine glycan is linked to N545. Polar residues-rich tracts occupy residues 645-656 (TKVPPPDTTHSS) and 677-689 (AYSNENAPGSWNG). Residues 645-691 (TKVPPPDTTHSSHITRRPNGKTWSTKRPAISPAYSNENAPGSWNGDQ) are disordered. A helical transmembrane segment spans residues 710-730 (VTIAVGASLLFLNVLAFAALY). The Cytoplasmic segment spans residues 731 to 848 (YRKDKRRQEP…LPNSHSTTRV (118 aa)). Residue S745 is modified to Phosphoserine. At Y792 the chain carries Phosphotyrosine.

This sequence belongs to the type-B carboxylesterase/lipase family. As to quaternary structure, homodimer, and heterodimer with NLGN1 and NLGN2. Interacts with neurexins NRXN1, NRXN2 and NRXN3. Interaction with neurexins is mediated by heparan sulfate glycan modification on neurexin. Interacts (via its C-terminus) with DLG4/PSD-95 (via PDZ domain 3). The N-terminus is blocked. Detected in brain and on hippocampus neurons, especially at excitatory synapses. Detected in retina (at protein level). Expressed in brain, spinal cord and dorsal root ganglion.

It is found in the cell membrane. It localises to the synapse. In terms of biological role, cell surface protein involved in cell-cell-interactions via its interactions with neurexin family members. Plays a role in synapse function and synaptic signal transmission, and probably mediates its effects by recruiting and clustering other synaptic proteins. May promote the initial formation of synapses, but is not essential for this. May also play a role in glia-glia or glia-neuron interactions in the developing peripheral nervous system. The chain is Neuroligin-3 (Nlgn3) from Rattus norvegicus (Rat).